Here is a 205-residue protein sequence, read N- to C-terminus: Proteasome subunit beta type-3 (205 aa).

This sequence belongs to the peptidase T1B family. In terms of assembly, the 26S proteasome consists of a 20S proteasome core and two 19S regulatory subunits. The 20S proteasome core is composed of 28 subunits that are arranged in four stacked rings, resulting in a barrel-shaped structure. The two end rings are each formed by seven alpha subunits, and the two central rings are each formed by seven beta subunits. The catalytic chamber with the active sites is on the inside of the barrel.

It is found in the cytoplasm. It localises to the nucleus. Functionally, non-catalytic component of the proteasome, a multicatalytic proteinase complex which is characterized by its ability to cleave peptides with Arg, Phe, Tyr, Leu, and Glu adjacent to the leaving group at neutral or slightly basic pH. The proteasome has an ATP-dependent proteolytic activity. The sequence is that of Proteasome subunit beta type-3 (psmB3) from Dictyostelium discoideum (Social amoeba).